A 38-amino-acid polypeptide reads, in one-letter code: Photosystem II reaction center protein L (38 aa).

A helical membrane pass occupies residues 17-37 (SLYWGLLLIFVLAVLFSNYFF).

It belongs to the PsbL family. As to quaternary structure, PSII is composed of 1 copy each of membrane proteins PsbA, PsbB, PsbC, PsbD, PsbE, PsbF, PsbH, PsbI, PsbJ, PsbK, PsbL, PsbM, PsbT, PsbX, PsbY, PsbZ, Psb30/Ycf12, at least 3 peripheral proteins of the oxygen-evolving complex and a large number of cofactors. It forms dimeric complexes.

It is found in the plastid. The protein localises to the chloroplast thylakoid membrane. In terms of biological role, one of the components of the core complex of photosystem II (PSII). PSII is a light-driven water:plastoquinone oxidoreductase that uses light energy to abstract electrons from H(2)O, generating O(2) and a proton gradient subsequently used for ATP formation. It consists of a core antenna complex that captures photons, and an electron transfer chain that converts photonic excitation into a charge separation. This subunit is found at the monomer-monomer interface and is required for correct PSII assembly and/or dimerization. The sequence is that of Photosystem II reaction center protein L from Huperzia lucidula (Shining clubmoss).